An 825-amino-acid polypeptide reads, in one-letter code: Ubiquitin carboxyl-terminal hydrolase 16 (825 aa).

The tract at residues 1 to 20 is disordered; that stretch reads MGKKRTKGRSAPDTVASESA. The UBP-type zinc-finger motif lies at 22-141; sequence PVCRHLRKGL…QVVDYVRKQA (120 aa). Residues Cys24, His26, Cys48, Cys51, Cys73, Cys76, Cys81, His89, His93, His102, Cys115, and Cys118 each coordinate Zn(2+). Residue Lys139 forms a Glycyl lysine isopeptide (Lys-Gly) (interchain with G-Cter in SUMO2) linkage. Over residues 164–180 the composition is skewed to basic and acidic residues; sequence EKESKNEQEREKSENLA. The disordered stretch occupies residues 164–184; that stretch reads EKESKNEQEREKSENLAKETI. The residue at position 188 (Ser188) is a Phosphoserine. The USP domain occupies 195–824; the sequence is KGLSNLGNTC…QAYLLFYERI (630 aa). The active-site Nucleophile is the Cys204. Positions 393–407 are enriched in basic and acidic residues; that stretch reads SGKKSINDKNVKMTM. The tract at residues 393 to 456 is disordered; sequence SGKKSINDKN…KQAKNQRRQQ (64 aa). The segment covering 408–419 has biased composition (acidic residues); it reads EEEDKDSEEEKD. Position 414 is a phosphoserine (Ser414). Over residues 436 to 456 the composition is skewed to basic residues; that stretch reads HLQKKAKKQAKKQAKNQRRQQ. Residues Ser520 and Ser531 each carry the phosphoserine modification. Residue His759 is the Proton acceptor of the active site.

Belongs to the peptidase C19 family. USP16 subfamily. As to quaternary structure, homotetramer. Associates with late pre-40S ribosomes. Interacts with CEP78; promoting deubiquitination of tektins. Phosphorylated at the onset of mitosis and dephosphorylated during the metaphase/anaphase transition. Phosphorylation by AURKB enhances the deubiquitinase activity.

It is found in the nucleus. It localises to the cytoplasm. It carries out the reaction Thiol-dependent hydrolysis of ester, thioester, amide, peptide and isopeptide bonds formed by the C-terminal Gly of ubiquitin (a 76-residue protein attached to proteins as an intracellular targeting signal).. Functionally, specifically deubiquitinates 'Lys-120' of histone H2A (H2AK119Ub), a specific tag for epigenetic transcriptional repression, thereby acting as a coactivator. Deubiquitination of histone H2A is a prerequisite for subsequent phosphorylation at 'Ser-11' of histone H3 (H3S10ph), and is required for chromosome segregation when cells enter into mitosis. In resting B- and T-lymphocytes, phosphorylation by AURKB leads to enhance its activity, thereby maintaining transcription in resting lymphocytes. Regulates Hox gene expression via histone H2A deubiquitination. Prefers nucleosomal substrates. Does not deubiquitinate histone H2B. Also deubiquitinates non-histone proteins, such as ribosomal protein RPS27A: deubiquitination of monoubiquitinated RPS27A promotes maturation of the 40S ribosomal subunit. Also mediates deubiquitination of tektin proteins (TEKT1, TEKT2, TEK3, TEKT4 and TEKT5), promoting their stability. This chain is Ubiquitin carboxyl-terminal hydrolase 16 (Usp16), found in Mus musculus (Mouse).